A 369-amino-acid polypeptide reads, in one-letter code: Transmembrane protein 198 (369 aa).

7 helical membrane passes run 37–57 (VVPS…CFFG), 60–80 (CFKA…IFLL), 93–113 (VEAS…VTML), 117–137 (VGLF…TLIG), 148–168 (SVWV…VLTL), 181–201 (VFGA…FALV), and 216–236 (VCWT…LGVL). Residues 266-308 (RQKEERRESSRKKKRKQPQSAQHTHAAKALHPEPAYRRKPNPI) form a disordered region.

Belongs to the TMEM198 family.

It localises to the membrane. The polypeptide is Transmembrane protein 198 (tmem198ab) (Danio rerio (Zebrafish)).